Reading from the N-terminus, the 113-residue chain is Putative glycerol transporter Lin0367 (113 aa).

Helical transmembrane passes span 3 to 23, 30 to 50, 63 to 83, and 92 to 112; these read IGIALATIAGGFLFPFAIRMM, EWGAIGGWMAAAFIVGTVWTI, GTVWVDMAVAAGIGVFTASLL, and VVNLAAAVVGGVLGGFLLSLF.

Its subcellular location is the membrane. Could be involved in the glycerol uptake either via facilitated diffusion or active transport. The sequence is that of Putative glycerol transporter Lin0367 from Listeria innocua serovar 6a (strain ATCC BAA-680 / CLIP 11262).